A 545-amino-acid chain; its full sequence is Glutamyl-tRNA(Gln) amidotransferase subunit B-1, chloroplastic/mitochondrial (545 aa).

The protein belongs to the GatB/GatE family. GatB subfamily. As to quaternary structure, subunit of the heterotrimeric GatCAB amidotransferase (AdT) complex, composed of A, B and C subunits.

It localises to the mitochondrion. The protein resides in the plastid. The protein localises to the chloroplast. The enzyme catalyses L-glutamyl-tRNA(Gln) + L-glutamine + ATP + H2O = L-glutaminyl-tRNA(Gln) + L-glutamate + ADP + phosphate + H(+). Allows the formation of correctly charged Gln-tRNA(Gln) through the transamidation of misacylated Glu-tRNA(Gln) in chloroplasts and mitochondria. The reaction takes place in the presence of glutamine and ATP through an activated gamma-phospho-Glu-tRNA(Gln). This chain is Glutamyl-tRNA(Gln) amidotransferase subunit B-1, chloroplastic/mitochondrial, found in Micromonas pusilla (strain CCMP1545) (Picoplanktonic green alga).